We begin with the raw amino-acid sequence, 571 residues long: Sialate:O-sulfotransferase 2 (571 aa).

Residues 1–20 (MAKLWFKFQRCFRYFRRKPV) lie on the Cytoplasmic side of the membrane. Residues 21 to 43 (RFFTLLAIYLTAGSLVFLHSGFV) form a helical membrane-spanning segment. Residues 44–571 (GQPAVPQSQA…TGVPDAYGPR (528 aa)) are Extracellular-facing. WSC domains are found at residues 133 to 225 (KAKY…YRLQ) and 236 to 330 (SAVF…YQTQ). N-linked (GlcNAc...) asparagine glycosylation is found at asparagine 195 and asparagine 248.

Belongs to the WSCD family.

Its subcellular location is the golgi apparatus membrane. Sialate:O-sulfotransferase that catalyzes 8-O-sulfation at the Sia-glycan level using 3'-phosphoadenosine 5'-phosphosulfate (PAPS) as a donor, forming 8-O-sulfated Sia (Sia8S)-glycans. Displays selectivity toward glycoproteins such as TF/transferrin. The polypeptide is Sialate:O-sulfotransferase 2 (Wscd2) (Mus musculus (Mouse)).